The chain runs to 287 residues: Acetyl-coenzyme A carboxylase carboxyl transferase subunit beta (287 aa).

Positions 25–287 constitute a CoA carboxyltransferase N-terminal domain; that stretch reads VWTKCSACEQ…KMLNTHVIEE (263 aa). 4 residues coordinate Zn(2+): Cys29, Cys32, Cys48, and Cys51. Residues 29-51 form a C4-type zinc finger; that stretch reads CSACEQVLYRAELERNLEVCPKC.

The protein belongs to the AccD/PCCB family. In terms of assembly, acetyl-CoA carboxylase is a heterohexamer composed of biotin carboxyl carrier protein (AccB), biotin carboxylase (AccC) and two subunits each of ACCase subunit alpha (AccA) and ACCase subunit beta (AccD). Zn(2+) is required as a cofactor.

The protein resides in the cytoplasm. The catalysed reaction is N(6)-carboxybiotinyl-L-lysyl-[protein] + acetyl-CoA = N(6)-biotinyl-L-lysyl-[protein] + malonyl-CoA. Its pathway is lipid metabolism; malonyl-CoA biosynthesis; malonyl-CoA from acetyl-CoA: step 1/1. Functionally, component of the acetyl coenzyme A carboxylase (ACC) complex. Biotin carboxylase (BC) catalyzes the carboxylation of biotin on its carrier protein (BCCP) and then the CO(2) group is transferred by the transcarboxylase to acetyl-CoA to form malonyl-CoA. In Aeromonas salmonicida (strain A449), this protein is Acetyl-coenzyme A carboxylase carboxyl transferase subunit beta.